The sequence spans 200 residues: UPF0316 protein SAUSA300_1892 (200 aa).

3 helical membrane-spanning segments follow: residues 8–28 (PWLM…FLTM), 40–60 (IAAS…GLVM), and 66–86 (IQNI…GMKI).

Belongs to the UPF0316 family.

Its subcellular location is the cell membrane. This Staphylococcus aureus (strain USA300) protein is UPF0316 protein SAUSA300_1892.